The primary structure comprises 414 residues: Isocitrate dehydrogenase [NADP] cytoplasmic (414 aa).

Serine 2 carries the N-acetylserine modification. A Phosphotyrosine modification is found at tyrosine 42. 75-77 provides a ligand contact to NADP(+); the sequence is TIT. Substrate is bound at residue threonine 77. Lysine 81 is subject to N6-acetyllysine. Position 82 (arginine 82) interacts with NADP(+). Substrate is bound by residues 94 to 100 and arginine 109; that span reads SPNGTIR. Lysine 126 bears the N6-succinyllysine mark. Substrate is bound by residues arginine 132 and lysine 212. N6-acetyllysine is present on residues lysine 224, lysine 233, and lysine 243. Residue aspartate 252 coordinates Mn(2+). Lysine 260 contributes to the NADP(+) binding site. Positions 275 and 279 each coordinate Mn(2+). 310 to 315 lines the NADP(+) pocket; that stretch reads GTVTRH. An N6-acetyllysine modification is found at lysine 321. NADP(+) is bound at residue asparagine 328. At serine 389 the chain carries Phosphoserine. Residue lysine 400 is modified to N6-succinyllysine.

The protein belongs to the isocitrate and isopropylmalate dehydrogenases family. Homodimer. Requires Mg(2+) as cofactor. Mn(2+) is required as a cofactor. Acetylation at Lys-374 dramatically reduces catalytic activity.

It is found in the cytoplasm. The protein localises to the cytosol. The enzyme catalyses D-threo-isocitrate + NADP(+) = 2-oxoglutarate + CO2 + NADPH. Catalyzes the NADP(+)-dependent oxidative decarboxylation of isocitrate (D-threo-isocitrate) to 2-ketoglutarate (2-oxoglutarate), which is required by other enzymes such as the phytanoyl-CoA dioxygenase. Plays a critical role in the generation of NADPH, an important cofactor in many biosynthesis pathways. May act as a corneal epithelial crystallin and may be involved in maintaining corneal epithelial transparency. This chain is Isocitrate dehydrogenase [NADP] cytoplasmic (IDH1), found in Pongo abelii (Sumatran orangutan).